We begin with the raw amino-acid sequence, 300 residues long: Porphobilinogen deaminase (300 aa).

At cysteine 242 the chain carries S-(dipyrrolylmethanemethyl)cysteine.

Belongs to the HMBS family. As to quaternary structure, monomer. Dipyrromethane serves as cofactor.

The catalysed reaction is 4 porphobilinogen + H2O = hydroxymethylbilane + 4 NH4(+). Its pathway is porphyrin-containing compound metabolism; protoporphyrin-IX biosynthesis; coproporphyrinogen-III from 5-aminolevulinate: step 2/4. Its function is as follows. Tetrapolymerization of the monopyrrole PBG into the hydroxymethylbilane pre-uroporphyrinogen in several discrete steps. The sequence is that of Porphobilinogen deaminase from Rickettsia bellii (strain OSU 85-389).